A 473-amino-acid chain; its full sequence is ATP synthase subunit beta (473 aa).

Gly-153 to Thr-160 serves as a coordination point for ATP.

This sequence belongs to the ATPase alpha/beta chains family. As to quaternary structure, F-type ATPases have 2 components, CF(1) - the catalytic core - and CF(0) - the membrane proton channel. CF(1) has five subunits: alpha(3), beta(3), gamma(1), delta(1), epsilon(1). CF(0) has three main subunits: a(1), b(2) and c(9-12). The alpha and beta chains form an alternating ring which encloses part of the gamma chain. CF(1) is attached to CF(0) by a central stalk formed by the gamma and epsilon chains, while a peripheral stalk is formed by the delta and b chains.

It is found in the cell inner membrane. It carries out the reaction ATP + H2O + 4 H(+)(in) = ADP + phosphate + 5 H(+)(out). Functionally, produces ATP from ADP in the presence of a proton gradient across the membrane. The catalytic sites are hosted primarily by the beta subunits. In Rickettsia conorii (strain ATCC VR-613 / Malish 7), this protein is ATP synthase subunit beta.